Reading from the N-terminus, the 290-residue chain is Acetyl-coenzyme A carboxylase carboxyl transferase subunit beta (290 aa).

One can recognise a CoA carboxyltransferase N-terminal domain in the interval 28 to 290; sequence VMTKCPQCKK…GGGESGWWRN (263 aa). C32, C35, C51, and C54 together coordinate Zn(2+). A C4-type zinc finger spans residues 32-54; that stretch reads CPQCKKIMYTKELVKNLRVCLSC.

This sequence belongs to the AccD/PCCB family. As to quaternary structure, acetyl-CoA carboxylase is a heterohexamer composed of biotin carboxyl carrier protein (AccB), biotin carboxylase (AccC) and two subunits each of ACCase subunit alpha (AccA) and ACCase subunit beta (AccD). Requires Zn(2+) as cofactor.

The protein resides in the cytoplasm. It catalyses the reaction N(6)-carboxybiotinyl-L-lysyl-[protein] + acetyl-CoA = N(6)-biotinyl-L-lysyl-[protein] + malonyl-CoA. Its pathway is lipid metabolism; malonyl-CoA biosynthesis; malonyl-CoA from acetyl-CoA: step 1/1. Functionally, component of the acetyl coenzyme A carboxylase (ACC) complex. Biotin carboxylase (BC) catalyzes the carboxylation of biotin on its carrier protein (BCCP) and then the CO(2) group is transferred by the transcarboxylase to acetyl-CoA to form malonyl-CoA. This Geobacillus thermodenitrificans (strain NG80-2) protein is Acetyl-coenzyme A carboxylase carboxyl transferase subunit beta.